The sequence spans 628 residues: Alpha-L-arabinofuranosidase A (628 aa).

Positions methionine 1–glycine 25 are cleaved as a signal peptide. Asparagine 36, asparagine 51, asparagine 74, asparagine 152, asparagine 171, asparagine 260, asparagine 359, asparagine 440, asparagine 493, and asparagine 610 each carry an N-linked (GlcNAc...) asparagine glycan.

This sequence belongs to the glycosyl hydrolase 51 family.

It catalyses the reaction Hydrolysis of terminal non-reducing alpha-L-arabinofuranoside residues in alpha-L-arabinosides.. Its pathway is glycan metabolism; L-arabinan degradation. In terms of biological role, acts only on small linear 1,5-alpha-linked L-arabinofuranosyl oligosaccharides. The chain is Alpha-L-arabinofuranosidase A (abfA) from Aspergillus niger.